The following is a 372-amino-acid chain: Neutral protease 2 homolog MGYG_06241 (372 aa).

The N-terminal stretch at 1 to 19 is a signal peptide; sequence MQFFTAIAAISALVAPALA. Positions 20–188 are excised as a propeptide; the sequence is LPTQELPQAP…THFAGTLNRR (169 aa). 2 disulfides stabilise this stretch: Cys-195–Cys-264 and Cys-271–Cys-289. His-313 provides a ligand contact to Zn(2+). Glu-314 is a catalytic residue. Residues His-317 and Asp-328 each contribute to the Zn(2+) site.

Belongs to the peptidase M35 family. Zn(2+) is required as a cofactor.

It localises to the secreted. The catalysed reaction is Preferential cleavage of bonds with hydrophobic residues in P1'. Also 3-Asn-|-Gln-4 and 8-Gly-|-Ser-9 bonds in insulin B chain.. Secreted metalloproteinase that allows assimilation of proteinaceous substrates. Shows high activities on basic nuclear substrates such as histone and protamine. May be involved in virulence. The polypeptide is Neutral protease 2 homolog MGYG_06241 (Arthroderma gypseum (strain ATCC MYA-4604 / CBS 118893) (Microsporum gypseum)).